The chain runs to 237 residues: DNA replication inhibitor toxin SocB (237 aa).

In terms of assembly, interacts with cognate antitoxin SocA and with beta sliding clamp (dnaN). In terms of processing, degraded by ClpXP, recognition of SocB by ClpX requires SocA.

The protein resides in the cytoplasm. Toxic component of an atypical type II toxin-antitoxin (TA) system. Upon overexpression in the absence of its cognate antitoxin SocA, leads to inhibition of colony formation, cellular filamentation, incomplete DNA replication and induction of the SOS response. Exercises toxicity by binding the beta sliding clamp (dnaN), blocking DNA replication and leading to premature replication fork collapse and incomplete cell division. Unlike most type II TA systems, the SocB toxin is unstable and targeted by its cognate antitoxin SocA for degradation by ClpXP. Not toxic upon expression in E.coli. This Caulobacter vibrioides (strain NA1000 / CB15N) (Caulobacter crescentus) protein is DNA replication inhibitor toxin SocB.